The primary structure comprises 223 residues: MKDTLKLYFVCGTVDCSRKNILTVVEEALQAGITLFQFREKGFTALQGKEKIAMAKQLQILCKQYQVPFIIDDDIDLVELIDADGLHIGQNDLPVDEARRRLPDKIIGLSVSTMDEYQKSQLSVVDYIGIGPFNPTQSKADAKPAVGNRTTKAVREINQDIPIVAIGGITSDFVHDIIESGADGIAVISAISKANHIVDATRQLRYEVEKALVNRQKHSDVIK.

Residues 37–41 (QFREK) and D72 contribute to the 4-amino-2-methyl-5-(diphosphooxymethyl)pyrimidine site. Mg(2+) is bound by residues D73 and D92. S110 serves as a coordination point for 4-amino-2-methyl-5-(diphosphooxymethyl)pyrimidine. 136–138 (TQS) is a binding site for 2-[(2R,5Z)-2-carboxy-4-methylthiazol-5(2H)-ylidene]ethyl phosphate. 4-amino-2-methyl-5-(diphosphooxymethyl)pyrimidine is bound at residue K139. Residues G168 and 188–189 (IS) contribute to the 2-[(2R,5Z)-2-carboxy-4-methylthiazol-5(2H)-ylidene]ethyl phosphate site.

Belongs to the thiamine-phosphate synthase family. The cofactor is Mg(2+).

It carries out the reaction 2-[(2R,5Z)-2-carboxy-4-methylthiazol-5(2H)-ylidene]ethyl phosphate + 4-amino-2-methyl-5-(diphosphooxymethyl)pyrimidine + 2 H(+) = thiamine phosphate + CO2 + diphosphate. The enzyme catalyses 2-(2-carboxy-4-methylthiazol-5-yl)ethyl phosphate + 4-amino-2-methyl-5-(diphosphooxymethyl)pyrimidine + 2 H(+) = thiamine phosphate + CO2 + diphosphate. The catalysed reaction is 4-methyl-5-(2-phosphooxyethyl)-thiazole + 4-amino-2-methyl-5-(diphosphooxymethyl)pyrimidine + H(+) = thiamine phosphate + diphosphate. The protein operates within cofactor biosynthesis; thiamine diphosphate biosynthesis; thiamine phosphate from 4-amino-2-methyl-5-diphosphomethylpyrimidine and 4-methyl-5-(2-phosphoethyl)-thiazole: step 1/1. Condenses 4-methyl-5-(beta-hydroxyethyl)thiazole monophosphate (THZ-P) and 2-methyl-4-amino-5-hydroxymethyl pyrimidine pyrophosphate (HMP-PP) to form thiamine monophosphate (TMP). The protein is Thiamine-phosphate synthase of Streptococcus agalactiae serotype Ia (strain ATCC 27591 / A909 / CDC SS700).